A 462-amino-acid chain; its full sequence is RuvB-like 2 (462 aa).

Residue 76–83 participates in ATP binding; that stretch reads GQPGTGKT.

This sequence belongs to the RuvB family. As to quaternary structure, forms homohexameric rings. Can form a dodecamer with ruvbl2 made of two stacked hexameric rings. Is a component of the RNA polymerase II holoenzyme complex. Component of the chromatin-remodeling Ino80 complex. Component of some MLL1/MLL complex.

The protein localises to the nucleus. The protein resides in the dynein axonemal particle. The catalysed reaction is ATP + H2O = ADP + phosphate + H(+). Its function is as follows. Has single-stranded DNA-stimulated ATPase and ATP-dependent DNA helicase (5' to 3') activity suggesting a role in nuclear processes such as recombination and transcription. Proposed core component of the chromatin remodeling INO80 complex which exhibits DNA- and nucleosome-activated ATPase activity and catalyzes ATP-dependent nucleosome sliding. Involved in the endoplasmic reticulum (ER)-associated degradation (ERAD) pathway where it negatively regulates expression of ER stress response genes. This is RuvB-like 2 (ruvbl2) from Xenopus laevis (African clawed frog).